The chain runs to 185 residues: Ribosome-recycling factor (185 aa).

This sequence belongs to the RRF family.

The protein resides in the cytoplasm. Functionally, responsible for the release of ribosomes from messenger RNA at the termination of protein biosynthesis. May increase the efficiency of translation by recycling ribosomes from one round of translation to another. This is Ribosome-recycling factor from Streptococcus agalactiae serotype V (strain ATCC BAA-611 / 2603 V/R).